The sequence spans 218 residues: Heart- and neural crest derivatives-expressed protein 1 (218 aa).

Disordered stretches follow at residues 1 to 23, 56 to 112, and 172 to 203; these read MNLVGSYAHHHHHHHHHHPHPAH, APDF…RTES, and ADGGRESKRKRELQQHEGFPPALGPGEKRIKG. The segment covering 8 to 21 has biased composition (basic residues); it reads AHHHHHHHHHHPHP. Over residues 68–92 the composition is skewed to low complexity; the sequence is AAAAAASYGPDARPGQSPGRLEALG. Basic residues predominate over residues 95-107; it reads LGRRKGSGPKKER. Residues 97–149 form the bHLH domain; that stretch reads RRKGSGPKKERRRTESINSAFAELRECIPNVPADTKLSKIKTLRLATSYIAYL. Residue threonine 110 is modified to Phosphothreonine; by PLK4. A Phosphoserine; by PLK4 modification is found at serine 112.

In terms of assembly, efficient DNA binding requires dimerization with another bHLH protein. Forms homodimers and heterodimers with TCF3 gene products E12 and E47, HAND2 and HEY1, HEY2 and HEYL (hairy-related transcription factors). Interacts with MDFIC. Interacts with SOX15; the interaction enhances HAND1-induced differentiation of trophoblast giant cells. In terms of processing, phosphorylation by PLK4 disrupts the interaction with MDFIC and leads to translocation into the nucleoplasm, allowing dimerization and transcription factor activity.

Its subcellular location is the nucleus. The protein resides in the nucleoplasm. It localises to the nucleolus. Functionally, transcription factor that plays an essential role in both trophoblast giant cell differentiation and in cardiac morphogenesis. Binds the DNA sequence 5'-NRTCTG-3' (non-canonical E-box). Acts as a transcriptional repressor of SOX15. In the adult, could be required for ongoing expression of cardiac-specific genes. The polypeptide is Heart- and neural crest derivatives-expressed protein 1 (HAND1) (Bos taurus (Bovine)).